Here is a 353-residue protein sequence, read N- to C-terminus: MQTYGDPNVSYAWYAANAGAVTNKSGRFISSHIAHTGLICFGAGANTLFELARYNPDLPMGSQGLVVLPHLAGLGLGGISNGVFTDTYQLLVVAILHLILSGVYGGGGMLHAFRYEEKLESYPATSRANKFKFDWNDPDRLTFILGHHLLFLAAGNIQFVEWARVHGIYDPVAGAVRQVEYNLDLGMIWNHQFDFLSISSLEDIMGGHAFLAFFMAAGGVFHILTKNYGEYNSFKGADLLSAEFVLSTSLAGAAYTAFVAALWCASNTTIYPVDLYGDVLQFKLGIAPYWIDTDSSLAADAHTGRAWLTNVHFFIGFFYLQGHFFHGLRALGFDFKSIGKLFDNLETSETTLN.

6 consecutive transmembrane segments (helical) span residues 28-48 (FISS…ANTL), 64-84 (GLVV…NGVF), 90-110 (LLVV…GGML), 204-224 (IMGG…FHIL), 244-264 (FVLS…ALWC), and 308-328 (LTNV…FHGL).

The protein belongs to the PsbB/PsbC family. IsiA/Pcb subfamily. The antenna complex consists of divinyl chlorophylls (a and b) and divinyl chlorophyll a/b binding proteins and binds more divinyl chlorophyll b than does the antenna complex from high-light-adapted Prochlorococcus. Also forms complexes with PSI, consisting of a PSI trimer with surrounded by a PcbG ring (probably with 18 subunits). Is the only subunit found in this ring under iron-replete conditions. Divinyl chlorophyll a serves as cofactor. The cofactor is divinyl chlorophyll b.

It localises to the cellular thylakoid membrane. Functionally, the antenna complex functions as a light receptor, it captures and delivers excitation energy to photosystems I. The Prochlorales pcb genes are not related to higher plant LHCs. This Prochlorococcus marinus (strain SARG / CCMP1375 / SS120) protein is Divinyl chlorophyll a/b light-harvesting protein PcbG (pcbG).